The sequence spans 124 residues: Large ribosomal subunit protein bL12 (124 aa).

Over residues 102-116 (MSKEDAEAAKTKLEE) the composition is skewed to basic and acidic residues. The disordered stretch occupies residues 102-124 (MSKEDAEAAKTKLEEAGASVELK).

Belongs to the bacterial ribosomal protein bL12 family. As to quaternary structure, homodimer. Part of the ribosomal stalk of the 50S ribosomal subunit. Forms a multimeric L10(L12)X complex, where L10 forms an elongated spine to which 2 to 4 L12 dimers bind in a sequential fashion. Binds GTP-bound translation factors.

Forms part of the ribosomal stalk which helps the ribosome interact with GTP-bound translation factors. Is thus essential for accurate translation. The sequence is that of Large ribosomal subunit protein bL12 from Chromohalobacter salexigens (strain ATCC BAA-138 / DSM 3043 / CIP 106854 / NCIMB 13768 / 1H11).